The primary structure comprises 136 residues: NADH-ubiquinone oxidoreductase chain 2 (136 aa).

Transmembrane regions (helical) follow at residues 12-32 (YFLIQSVASVIFLASILNQSF), 34-54 (FLIPFALLIKIGAAPFHMWLV), 74-94 (IGPLLGLAMLSSVSHLSWLMV), and 99-119 (FLLMLVYYVTYLAILYFAVIL).

This sequence belongs to the complex I subunit 2 family.

The protein resides in the mitochondrion inner membrane. It carries out the reaction a ubiquinone + NADH + 5 H(+)(in) = a ubiquinol + NAD(+) + 4 H(+)(out). Core subunit of the mitochondrial membrane respiratory chain NADH dehydrogenase (Complex I) that is believed to belong to the minimal assembly required for catalysis. Complex I functions in the transfer of electrons from NADH to the respiratory chain. The immediate electron acceptor for the enzyme is believed to be ubiquinone. This Artemia salina (Brine shrimp) protein is NADH-ubiquinone oxidoreductase chain 2 (ND2).